The chain runs to 282 residues: BTB/POZ domain-containing protein At3g56230 (282 aa).

Basic and acidic residues predominate over residues 40-50 (GSKEDRHDKSN). The tract at residues 40–66 (GSKEDRHDKSNHNSTINNGSSISSSPL) is disordered. Residues 51–64 (HNSTINNGSSISSS) show a composition bias toward low complexity. The BTB domain occupies 111–181 (ADILLKPGDD…LYTGTLASDK (71 aa)).

The protein operates within protein modification; protein ubiquitination. Its function is as follows. May act as a substrate-specific adapter of an E3 ubiquitin-protein ligase complex (CUL3-RBX1-BTB) which mediates the ubiquitination and subsequent proteasomal degradation of target proteins. This chain is BTB/POZ domain-containing protein At3g56230, found in Arabidopsis thaliana (Mouse-ear cress).